Here is a 167-residue protein sequence, read N- to C-terminus: Ribosome maturation factor RimP (167 aa).

It belongs to the RimP family.

The protein localises to the cytoplasm. Its function is as follows. Required for maturation of 30S ribosomal subunits. This is Ribosome maturation factor RimP from Cytophaga hutchinsonii (strain ATCC 33406 / DSM 1761 / CIP 103989 / NBRC 15051 / NCIMB 9469 / D465).